Here is a 120-residue protein sequence, read N- to C-terminus: Ribosome-binding factor A (120 aa).

It belongs to the RbfA family. As to quaternary structure, monomer. Binds 30S ribosomal subunits, but not 50S ribosomal subunits or 70S ribosomes.

It localises to the cytoplasm. Functionally, one of several proteins that assist in the late maturation steps of the functional core of the 30S ribosomal subunit. Associates with free 30S ribosomal subunits (but not with 30S subunits that are part of 70S ribosomes or polysomes). Required for efficient processing of 16S rRNA. May interact with the 5'-terminal helix region of 16S rRNA. The polypeptide is Ribosome-binding factor A (Desulforamulus reducens (strain ATCC BAA-1160 / DSM 100696 / MI-1) (Desulfotomaculum reducens)).